We begin with the raw amino-acid sequence, 229 residues long: Uracil-DNA glycosylase (229 aa).

The active-site Proton acceptor is the aspartate 67.

Belongs to the uracil-DNA glycosylase (UDG) superfamily. UNG family.

Its subcellular location is the cytoplasm. It catalyses the reaction Hydrolyzes single-stranded DNA or mismatched double-stranded DNA and polynucleotides, releasing free uracil.. Excises uracil residues from the DNA which can arise as a result of misincorporation of dUMP residues by DNA polymerase or due to deamination of cytosine. This is Uracil-DNA glycosylase from Coxiella burnetii (strain CbuG_Q212) (Coxiella burnetii (strain Q212)).